The chain runs to 722 residues: Solute carrier organic anion transporter family member 4C1 (722 aa).

A disordered region spans residues 1–81 (MQGSKGIENP…PGSQLSELEE (81 aa)). The Cytoplasmic portion of the chain corresponds to 1 to 101 (MQGSKGIENP…QCLQRCNTPQ (101 aa)). 2 positions are modified to phosphoserine: Ser15 and Ser16. Thr19 bears the Phosphothreonine mark. 3 positions are modified to phosphoserine: Ser24, Ser26, and Ser28. The segment covering 25–46 (ASPSQVEVSAVASRNQNGGSQP) has biased composition (polar residues). A helical membrane pass occupies residues 102–122 (GFLLHYCLLALTQGIVVNGLV). Topologically, residues 123 to 141 (NISISTIEKRYEMKSSLTG) are extracellular. Residues 142–162 (LISSSYDISFCVLSLFVSFFG) form a helical membrane-spanning segment. At 163 to 168 (ERGHKP) the chain is on the cytoplasmic side. Residues 169 to 193 (RWLAFASFMIGLGALVFSLPHFFSG) traverse the membrane as a helical segment. Residues 194-218 (RYELGSIFEDTCLTRNSTRCSSSTS) lie on the Extracellular side of the membrane. A helical transmembrane segment spans residues 219–249 (LLSNYFYVFVLGQLLLGTGGTPLYTLGTAFI). At 250–269 (DDSVPTHKSSLYIGIGYSMS) the chain is on the cytoplasmic side. A helical membrane pass occupies residues 270-290 (ILGPAIGYVLGGQLLTMYIDI). The Extracellular segment spans residues 291–306 (AMGQSSDLTEDDPRWL). Residues 307 to 331 (GAWWIGFLLAWLFAWSLIMPFSCFP) traverse the membrane as a helical segment. Residues 332–376 (KHLPGTAKIQAGKTSQTHQNNSTSFQHTDENFGKSIKDFPTAVKN) are Cytoplasmic-facing. A helical transmembrane segment spans residues 377–398 (LMRNTVFICLVLSTTSEALITT). Residues 399-418 (GFATFLPKFIENQFGLTSSF) lie on the Extracellular side of the membrane. The chain crosses the membrane as a helical span at residues 419–442 (AATLGGAVLIPGAALGQILGGVLV). Residues 443–446 (SKFK) lie on the Cytoplasmic side of the membrane. The helical transmembrane segment at 447–470 (MKCKNTMKFALCTSGVALVLSFVF) threads the bilayer. Topologically, residues 471–578 (IYAKCENEPF…RTRCSNLPIF (108 aa)) are extracellular. The Kazal-like domain occupies 494 to 549 (GNLTAPCNANCNCLRSYYYPLCGSDGIQYFSPCFAGCLNSVSNRKPKVYYNCSCIE). 3 disulfides stabilise this stretch: Cys500–Cys530, Cys506–Cys526, and Cys515–Cys547. Residues 579–601 (LGIFFITVIFTFMAGTPITVSIL) traverse the membrane as a helical segment. Over 602–610 (RCVNHRHRS) the chain is Cytoplasmic. Residues 611–636 (LALGVQFMLLRLLGTIPGPIIFGVII) traverse the membrane as a helical segment. At 637 to 670 (DSTCVLWDVNECGIKGACWIYDNIKMAHMLVAIS) the chain is on the extracellular side. Residues 671–688 (VTCKVITIFFNGLAIVLY) form a helical membrane-spanning segment. Residues 689–722 (KPPPPGTEVSFQSQNVIVSTISVEEDLDKAENEG) lie on the Cytoplasmic side of the membrane.

Belongs to the organo anion transporter (TC 2.A.60) family. As to expression, strongly expressed in initial segment of epididymis and seminal vesicles.

The protein localises to the basolateral cell membrane. It carries out the reaction estrone 3-sulfate(out) = estrone 3-sulfate(in). It catalyses the reaction L-thyroxine(out) = L-thyroxine(in). The enzyme catalyses 3,3',5-triiodo-L-thyronine(out) = 3,3',5-triiodo-L-thyronine(in). The catalysed reaction is chenodeoxycholate(out) = chenodeoxycholate(in). It carries out the reaction glycocholate(out) = glycocholate(in). It catalyses the reaction L-homoarginine(in) = L-homoarginine(out). The enzyme catalyses L-arginine(in) = L-arginine(out). The catalysed reaction is N(omega),N(omega)-dimethyl-L-arginine(out) = N(omega),N(omega)-dimethyl-L-arginine(in). Mediates the transport of organic anions such as steroids (estrone 3-sulfate, chenodeoxycholate, glycocholate) and thyroid hormones (3,3',5-triiodo-L-thyronine (T3), L-thyroxine (T4)), in the kidney. Capable of transporting cAMP and pharmacological substances such as digoxin, ouabain and methotrexate. Transport is independent of sodium, chloride ion, and ATP. Transport activity is stimulated by an acidic extracellular environment due to increased substrate affinity to the transporter. The driving force for this transport activity is currently not known. The role of hydrogencarbonate (HCO3(-), bicarbonate) as the probable counteranion that exchanges for organic anions is still not well defined. Functions as an uptake transporter at the apical membrane, suggesting a role in renal reabsorption. Involved in the renal secretion of the uremic toxin ADMA (N(omega),N(omega)-dimethyl-L-arginine or asymmetrical dimethylarginine), which is associated to cardiovascular events and mortality, and the structurally related amino acids L-arginine and L-homoarginine (a cardioprotective biomarker). Can act bidirectionally, suggesting a dual protective role of this transport protein; exporting L-homoarginine after being synthesized in proximal tubule cells, and mediating uptake of ADMA from the blood into proximal tubule cells where it is degraded by the enzyme dimethylarginine dimethylaminohydrolase 1 (DDAH1). May be involved in sperm maturation by enabling directed movement of organic anions and compounds within or between cells. This ion-transporting process is important to maintain the strict epididymal homeostasis necessary for sperm maturation. May have a role in secretory functions since seminal vesicle epithelial cells are assumed to secrete proteins involved in decapacitation by modifying surface proteins to facilitate the acquisition of the ability to fertilize the egg. In Mus musculus (Mouse), this protein is Solute carrier organic anion transporter family member 4C1.